The following is a 154-amino-acid chain: MAARLCCQLDPARDVLCLRPVGAESRGRPFSGPLGTLSSPSLSAVSTDHGAHLSLRGLPVCAFSSAGPCALRFTSARRMETTVNAHQILPKVLHKRTLGLPAMSTTDLEAYFKDCVFKDWEELGEEIRLKVFVLGGCRHKLVCAPAPCNFFTSA.

The mitochondrial targeting sequence stretch occupies residues 68-117 (PCALRFTSARRMETTVNAHQILPKVLHKRTLGLPAMSTTDLEAYFKDCVF).

This sequence belongs to the orthohepadnavirus protein X family. May form homodimer. May interact with host CEBPA, CFLAR, CREB1, DDB1, E4F1, HBXIP, HSPD1/HSP60, NFKBIA, POLR2E and SMAD4. Interacts with host SMC5-SMC6 complex and induces its degradation. Interacts with host TRPC4AP; leading to prevent ubiquitination of TRPC4AP. Interacts with host PLSCR1; this interaction promotes ubiquitination and degradation of HBx and impairs HBx-mediated cell proliferation. In terms of processing, a fraction may be phosphorylated in insect cells and HepG2 cells, a human hepatoblastoma cell line. Phosphorylated in vitro by host protein kinase C or mitogen-activated protein kinase. N-acetylated in insect cells.

The protein resides in the host cytoplasm. Its subcellular location is the host nucleus. It localises to the host mitochondrion. Multifunctional protein that plays a role in silencing host antiviral defenses and promoting viral transcription. Does not seem to be essential for HBV infection. May be directly involved in development of cirrhosis and liver cancer (hepatocellular carcinoma). Most of cytosolic activities involve modulation of cytosolic calcium. The effect on apoptosis is controversial depending on the cell types in which the studies have been conducted. May induce apoptosis by localizing in mitochondria and causing loss of mitochondrial membrane potential. May also modulate apoptosis by binding host CFLAR, a key regulator of the death-inducing signaling complex (DISC). Promotes viral transcription by using the host E3 ubiquitin ligase DDB1 to target the SMC5-SMC6 complex to proteasomal degradation. This host complex would otherwise bind to viral episomal DNA, and prevents its transcription. Moderately stimulates transcription of many different viral and cellular transcription elements. Promoters and enhancers stimulated by HBx contain DNA binding sites for NF-kappa-B, AP-1, AP-2, c-EBP, ATF/CREB, or the calcium-activated factor NF-AT. This Homo sapiens (Human) protein is Protein X.